Reading from the N-terminus, the 282-residue chain is Undecaprenyl-diphosphatase (282 aa).

A run of 6 helical transmembrane segments spans residues 90 to 110 (YRLG…GLLF), 121 to 141 (LWVV…AEYL), 165 to 185 (LALV…LFLG), 194 to 214 (FGFL…LPDA), 228 to 248 (QLLV…SWFL), and 256 to 276 (MYWF…LLAT).

This sequence belongs to the UppP family.

The protein resides in the cell membrane. The catalysed reaction is di-trans,octa-cis-undecaprenyl diphosphate + H2O = di-trans,octa-cis-undecaprenyl phosphate + phosphate + H(+). Its function is as follows. Catalyzes the dephosphorylation of undecaprenyl diphosphate (UPP). Confers resistance to bacitracin. In Mycobacterium marinum (strain ATCC BAA-535 / M), this protein is Undecaprenyl-diphosphatase.